The sequence spans 554 residues: Chaperonin GroEL (554 aa).

Residues 29–32 (TLGP), Lys-50, 86–90 (DGTTT), Gly-414, and Asp-495 contribute to the ATP site.

This sequence belongs to the chaperonin (HSP60) family. As to quaternary structure, forms a cylinder of 14 subunits composed of two heptameric rings stacked back-to-back. Interacts with the co-chaperonin GroES.

The protein localises to the cytoplasm. The catalysed reaction is ATP + H2O + a folded polypeptide = ADP + phosphate + an unfolded polypeptide.. In terms of biological role, together with its co-chaperonin GroES, plays an essential role in assisting protein folding. The GroEL-GroES system forms a nano-cage that allows encapsulation of the non-native substrate proteins and provides a physical environment optimized to promote and accelerate protein folding. The polypeptide is Chaperonin GroEL (Pelagibacter ubique (strain HTCC1062)).